A 431-amino-acid polypeptide reads, in one-letter code: Histidinol dehydrogenase 1 (431 aa).

NAD(+) contacts are provided by Tyr-127, Gln-188, and Asn-211. Substrate is bound by residues Ser-234, Gln-256, and His-259. Residues Gln-256 and His-259 each contribute to the Zn(2+) site. Active-site proton acceptor residues include Glu-324 and His-325. Substrate contacts are provided by His-325, Asp-358, Glu-412, and His-417. Residue Asp-358 coordinates Zn(2+). Residue His-417 coordinates Zn(2+).

Belongs to the histidinol dehydrogenase family. It depends on Zn(2+) as a cofactor.

It carries out the reaction L-histidinol + 2 NAD(+) + H2O = L-histidine + 2 NADH + 3 H(+). The protein operates within amino-acid biosynthesis; L-histidine biosynthesis; L-histidine from 5-phospho-alpha-D-ribose 1-diphosphate: step 9/9. In terms of biological role, catalyzes the sequential NAD-dependent oxidations of L-histidinol to L-histidinaldehyde and then to L-histidine. In Nostoc sp. (strain PCC 7120 / SAG 25.82 / UTEX 2576), this protein is Histidinol dehydrogenase 1 (hisD1).